Here is an 871-residue protein sequence, read N- to C-terminus: DNA mismatch repair protein MutS (871 aa).

Residue 616–623 (GPNMAGKS) participates in ATP binding. Residues 801–825 (ETEKTEESMEGTNLPKKKKEEKTSS) form a disordered region.

It belongs to the DNA mismatch repair MutS family.

This protein is involved in the repair of mismatches in DNA. It is possible that it carries out the mismatch recognition step. This protein has a weak ATPase activity. This Clostridium kluyveri (strain NBRC 12016) protein is DNA mismatch repair protein MutS.